We begin with the raw amino-acid sequence, 87 residues long: Exodeoxyribonuclease 7 small subunit (87 aa).

Belongs to the XseB family. Heterooligomer composed of large and small subunits.

It localises to the cytoplasm. It carries out the reaction Exonucleolytic cleavage in either 5'- to 3'- or 3'- to 5'-direction to yield nucleoside 5'-phosphates.. In terms of biological role, bidirectionally degrades single-stranded DNA into large acid-insoluble oligonucleotides, which are then degraded further into small acid-soluble oligonucleotides. The polypeptide is Exodeoxyribonuclease 7 small subunit (Xanthomonas campestris pv. campestris (strain 8004)).